The primary structure comprises 397 residues: 2,6-dihydroxypyridine 3-monooxygenase (397 aa).

Residues 14 to 16, 35 to 36, Val-49, Leu-120, Asp-306, and 316 to 320 each bind FAD; these read SIS, ER, and AAGGA.

In terms of assembly, homodimer. Requires FAD as cofactor.

The catalysed reaction is 2,6-dihydroxypyridine + NADH + O2 + H(+) = 2,3,6-trihydroxypyridine + NAD(+) + H2O. The protein operates within alkaloid degradation; nicotine degradation. Its function is as follows. Catalyzes the conversion of 2,6-dihydroxypyridine into 2,3,6-trihydroxypyridine in the nicotine degradation pathway. This is 2,6-dihydroxypyridine 3-monooxygenase (dhpH) from Paenarthrobacter nicotinovorans (Arthrobacter nicotinovorans).